The chain runs to 218 residues: ATP-dependent dethiobiotin synthetase BioD (218 aa).

10–15 (NAGKTT) lines the ATP pocket. Threonine 14 is a binding site for Mg(2+). Lysine 35 is a catalytic residue. Residue threonine 39 participates in substrate binding. Glutamate 116 provides a ligand contact to Mg(2+). ATP is bound by residues 116–119 (EGAG) and 176–177 (LR).

It belongs to the dethiobiotin synthetase family. In terms of assembly, homodimer. Mg(2+) serves as cofactor.

It is found in the cytoplasm. It catalyses the reaction (7R,8S)-7,8-diammoniononanoate + CO2 + ATP = (4R,5S)-dethiobiotin + ADP + phosphate + 3 H(+). It participates in cofactor biosynthesis; biotin biosynthesis; biotin from 7,8-diaminononanoate: step 1/2. Functionally, catalyzes a mechanistically unusual reaction, the ATP-dependent insertion of CO2 between the N7 and N8 nitrogen atoms of 7,8-diaminopelargonic acid (DAPA, also called 7,8-diammoniononanoate) to form a ureido ring. The protein is ATP-dependent dethiobiotin synthetase BioD of Helicobacter pylori (strain J99 / ATCC 700824) (Campylobacter pylori J99).